The primary structure comprises 324 residues: Aspartate carbamoyltransferase catalytic subunit (324 aa).

Carbamoyl phosphate-binding residues include arginine 65 and threonine 66. Lysine 93 is a binding site for L-aspartate. Residues arginine 115, histidine 145, and glutamine 148 each contribute to the carbamoyl phosphate site. L-aspartate contacts are provided by arginine 178 and arginine 233. Carbamoyl phosphate contacts are provided by glycine 274 and proline 275.

It belongs to the aspartate/ornithine carbamoyltransferase superfamily. ATCase family. In terms of assembly, heterododecamer (2C3:3R2) of six catalytic PyrB chains organized as two trimers (C3), and six regulatory PyrI chains organized as three dimers (R2).

It carries out the reaction carbamoyl phosphate + L-aspartate = N-carbamoyl-L-aspartate + phosphate + H(+). It functions in the pathway pyrimidine metabolism; UMP biosynthesis via de novo pathway; (S)-dihydroorotate from bicarbonate: step 2/3. Functionally, catalyzes the condensation of carbamoyl phosphate and aspartate to form carbamoyl aspartate and inorganic phosphate, the committed step in the de novo pyrimidine nucleotide biosynthesis pathway. The polypeptide is Aspartate carbamoyltransferase catalytic subunit (Nitrosococcus oceani (strain ATCC 19707 / BCRC 17464 / JCM 30415 / NCIMB 11848 / C-107)).